The primary structure comprises 791 residues: DUF1769 family protein duc1 (791 aa).

The tract at residues 158–189 (ADSQESDTESLPEINDSSDVSLSDLPSTNVTP) is disordered. Low complexity predominate over residues 174–184 (SSDVSLSDLPS). The FFAT motif lies at 373 to 379 (RYFTALE). Tyr374 bears the Phosphotyrosine mark. Thr376 is modified (phosphothreonine). Disordered regions lie at residues 381–505 (QQDQ…SNRR), 542–606 (NVAG…VDGK), and 630–658 (PKPV…NLDP). Residues 415–426 (LIKRMSLRSKKS) show a composition bias toward basic residues. Residues 444–453 (STASAASTSA) show a composition bias toward low complexity. The segment covering 455-473 (KTEKEKKMSAPRRSLDKLI) has biased composition (basic and acidic residues). A phosphoserine mark is found at Ser477 and Ser493. Residues 477–487 (SLHRHHHHHHK) are compositionally biased toward basic residues. Polar residues predominate over residues 555–564 (EQTSITSGVP). Residue Ser574 is modified to Phosphoserine. Residues 574–586 (STPEKIVEERSID) are compositionally biased toward basic and acidic residues. Polar residues predominate over residues 587 to 601 (EVSQSNTPSSKQLPQ).

This sequence belongs to the UPF0590 family. In terms of assembly, interacts (via FFAT-motif) with scs2 (via MSP domain); the interaction is direct and serves to restrict the localization of duc1 to areas of cell membrane-endoplasmic reticulum contact sites, and away from the cell division site.

It localises to the cell membrane. Functionally, promotes the proper distribution of phosphatidylinositol 4,5-bisphosphate (PtdIns(4,5)P2/PIP2) synthesis at the cell membrane. May bind phosphatidylinositol 4,5-bisphosphate (PtdIns(4,5)P2/PIP2) and is required for robust anchoring of the contractile ring to the cell membrane. The sequence is that of DUF1769 family protein duc1 from Schizosaccharomyces pombe (strain 972 / ATCC 24843) (Fission yeast).